A 78-amino-acid polypeptide reads, in one-letter code: MNQIRLFAQSALVSVMGMGMVFAFLLLLICVVRCVGALVSSFGWDRGPDEGVGAAVPAGGALAAAIAVAVHEKARSTS.

A run of 2 helical transmembrane segments spans residues 12-32 and 51-71; these read LVSV…ICVV and GVGA…VAVH.

It localises to the cell membrane. This is an uncharacterized protein from Treponema pallidum (strain Nichols).